Here is a 272-residue protein sequence, read N- to C-terminus: MGRKRRVKSESSPFDSFPEDCISYIISFTNPRDACVAATVSKTFESTVKSDIIWEKFLPADYESLIPPSRVFSSKKELYFSLCNDPVLFDDDKKSVWLEKASGKRCLMLSAMNLSIIWGDNPQYWQWIPIPESRFEKVAKLRDVCWFEIRGRTNTRVLSPRTRYSAYIVFKGVDKCYGFQNVAIEAAVGVVGQEPSRRLICFSEAIRRGRRNVVKPKQREDGWMEIELGEFFNDGGIMDNDEIEMSALETKQLNRKCGLIIQGIEIRPAKIL.

In terms of domain architecture, F-box spans 11–57; sequence SSPFDSFPEDCISYIISFTNPRDACVAATVSKTFESTVKSDIIWEKF.

Part of a SCF (ASK-cullin-F-box) protein ligase complex. Interacts with SKP1B/ASK2, ASK11 and ASK12.

Its pathway is protein modification; protein ubiquitination. In terms of biological role, component of SCF(ASK-cullin-F-box) E3 ubiquitin ligase complexes, which may mediate the ubiquitination and subsequent proteasomal degradation of target proteins. The sequence is that of F-box protein PP2-B10 (PP2B10) from Arabidopsis thaliana (Mouse-ear cress).